We begin with the raw amino-acid sequence, 318 residues long: DNA repair nuclease/redox regulator APEX1 (318 aa).

Residues Met1–Asn33 form a necessary for interaction with YBX1, binding to RNA, association together with NPM1 to rRNA, endoribonuclease activity on abasic RNA and localization in the nucleoli region. The tract at residues Met1–Ala60 is disordered. N6-acetyllysine; by EP300 occurs at positions 6 and 7. The Nuclear localization signal (NLS) motif lies at Gly8 to Asp13. Positions Glu16 to Ala38 are enriched in basic and acidic residues. The interval Ala23 to Asn33 is necessary for interaction with NPM1 and for efficient rRNA binding. Residues Lys27, Lys31, Lys32, and Lys35 each carry the N6-acetyllysine modification. Ser54 bears the Phosphoserine mark. Residues Ile64–Gly80 carry the Nuclear export signal (NES) motif. The residue at position 65 (Cys65) is an S-nitrosocysteine; alternate. An intrachain disulfide couples Cys65 to Cys93. Asp70 lines the Mg(2+) pocket. An S-nitrosocysteine; alternate modification is found at Cys93. Glu96 contributes to the Mg(2+) binding site. The active site involves Tyr171. At Lys197 the chain carries N6-acetyllysine. Residues Asp210 and Asn212 each contribute to the Mg(2+) site. Asp210 acts as the Proton donor/acceptor in catalysis. Residue Thr233 is modified to Phosphothreonine; by CDK5. Residues His289–Leu318 are mitochondrial targeting sequence (MTS). Mg(2+) is bound at residue Asp308. Cys310 bears the S-nitrosocysteine mark.

This sequence belongs to the DNA repair enzymes AP/ExoA family. In terms of assembly, monomer. Homodimer; disulfide-linked. Component of the SET complex, composed of at least APEX1, SET, ANP32A, HMGB2, NME1 and TREX1. Associates with the dimer XRCC5/XRCC6 in a DNA-dependent manner. Interacts with SIRT1; the interaction is increased in the context of genotoxic stress. Interacts with HDAC1, HDAC2 and HDAC3; the interactions are not dependent on the APEX1 acetylation status. Interacts with XRCC1; the interaction is induced by SIRT1 and increased with the APEX1 acetylated form. Interacts with NPM1 (via N-terminal domain); the interaction is RNA-dependent and decreases in hydrogen peroxide-damaged cells. Interacts (via N-terminus) with YBX1 (via C-terminus); the interaction is increased in presence of APEX1 acetylated at Lys-6 and Lys-7. Interacts with HNRNPL; the interaction is DNA-dependent. Interacts (via N-terminus) with KPNA1 and KPNA2. Interacts with TXN; the interaction stimulates the FOS/JUN AP-1 complex DNA-binding activity in a redox-dependent manner. Interacts with GZMA, KRT8, MDM2, POLB, PRDX6, PRPF19, RPLP0, TOMM20 and WDR77. Binds to CDK5. Mg(2+) is required as a cofactor. The cofactor is Mn(2+). Phosphorylated. Phosphorylation by kinase PKC or casein kinase CK2 results in enhanced redox activity that stimulates binding of the FOS/JUN AP-1 complex to its cognate binding site. AP-endodeoxyribonuclease activity is not affected by CK2-mediated phosphorylation. Phosphorylation of Thr-233 by CDK5 in response to MPP(+)/MPTP (1-methyl-4-phenylpyridinium) reduces AP-endodeoxyribonuclease activity resulting in accumulation of DNA damage and contributing to neuronal death. In terms of processing, acetylated on Lys-6 and Lys-7. Acetylation is increased by the transcriptional coactivator EP300 acetyltransferase, genotoxic agents like H(2)O(2) and methyl methanesulfonate (MMS). Acetylation increases its binding affinity to the negative calcium response element (nCaRE) DNA promoter. The acetylated form induces a stronger binding of YBX1 to the Y-box sequence in the MDR1 promoter than the unacetylated form. Deacetylated on lysines. Lys-6 and Lys-7 are deacetylated by SIRT1. Post-translationally, cleaved at Lys-31 by granzyme A to create the mitochondrial form; leading in reduction of binding to DNA, AP endodeoxyribonuclease activity, redox activation of transcription factors and to enhanced cell death. Cleaved by granzyme K; leading to intracellular ROS accumulation and enhanced cell death after oxidative stress. Cys-69 and Cys-93 are nitrosylated in response to nitric oxide (NO) and lead to the exposure of the nuclear export signal (NES). In terms of processing, ubiquitinated by MDM2; leading to translocation to the cytoplasm and proteasomal degradation.

It localises to the nucleus. It is found in the nucleolus. The protein localises to the nucleus speckle. The protein resides in the endoplasmic reticulum. Its subcellular location is the cytoplasm. It localises to the mitochondrion. It catalyses the reaction a deoxyribonucleotide-2'-deoxyribose-5'-monophosphate-DNA + H2O = a 5'-end 2'-deoxyribose-5'-monophosphate-DNA + a 3'-end 2'-deoxyribonucleotide-DNA + H(+). The enzyme catalyses Exonucleolytic cleavage in the 3'- to 5'-direction to yield nucleoside 5'-phosphates.. It carries out the reaction a 3'-end 2'-deoxyribonucleotide-3'-phosphoglycolate-DNA + H2O = 2-phosphoglycolate + a 3'-end 2'-deoxyribonucleotide-DNA + H(+). The catalysed reaction is a 3'-end 2'-deoxyribonucleotide-8-oxoguanine-DNA + H2O = 8-oxo-dGMP + a 3'-end 2'-deoxyribonucleotide-DNA + H(+). With respect to regulation, NPM1 stimulates endodeoxyribonuclease activity on double-stranded DNA with AP sites, but inhibits endoribonuclease activity on single-stranded RNA containing AP sites. Its function is as follows. Multifunctional protein that plays a central role in the cellular response to oxidative stress. The two major activities of APEX1 are DNA repair and redox regulation of transcriptional factors. Functions as an apurinic/apyrimidinic (AP) endodeoxyribonuclease in the base excision repair (BER) pathway of DNA lesions induced by oxidative and alkylating agents. Initiates repair of AP sites in DNA by catalyzing hydrolytic incision of the phosphodiester backbone immediately adjacent to the damage, generating a single-strand break with 5'-deoxyribose phosphate and 3'-hydroxyl ends. Also incises at AP sites in the DNA strand of DNA/RNA hybrids, single-stranded DNA regions of R-loop structures, and single-stranded RNA molecules. Operates at switch sites of immunoglobulin (Ig) constant regions where it mediates Ig isotype class switch recombination. Processes AP sites induced by successive action of AICDA and UNG. Generates staggered nicks in opposite DNA strands resulting in the formation of double-strand DNA breaks that are finally resolved via non-homologous end joining repair pathway. Has 3'-5' exodeoxyribonuclease activity on mismatched deoxyribonucleotides at the 3' termini of nicked or gapped DNA molecules during short-patch BER. Possesses DNA 3' phosphodiesterase activity capable of removing lesions (such as phosphoglycolate and 8-oxoguanine) blocking the 3' side of DNA strand breaks. Also acts as an endoribonuclease involved in the control of single-stranded RNA metabolism. Plays a role in regulating MYC mRNA turnover by preferentially cleaving in between UA and CA dinucleotides of the MYC coding region determinant (CRD). In association with NMD1, plays a role in the rRNA quality control process during cell cycle progression. Acts as a loading factor for POLB onto non-incised AP sites in DNA and stimulates the 5'-terminal deoxyribose 5'-phosphate (dRp) excision activity of POLB. Exerts reversible nuclear redox activity to regulate DNA binding affinity and transcriptional activity of transcriptional factors by controlling the redox status of their DNA-binding domain, such as the FOS/JUN AP-1 complex after exposure to IR. Involved in calcium-dependent down-regulation of parathyroid hormone (PTH) expression by binding to negative calcium response elements (nCaREs). Together with HNRNPL or the dimer XRCC5/XRCC6, associates with nCaRE, acting as an activator of transcriptional repression. May also play a role in the epigenetic regulation of gene expression by participating in DNA demethylation. Stimulates the YBX1-mediated MDR1 promoter activity, when acetylated at Lys-6 and Lys-7, leading to drug resistance. Plays a role in protection from granzyme-mediated cellular repair leading to cell death. Binds DNA and RNA. Associates, together with YBX1, on the MDR1 promoter. Together with NPM1, associates with rRNA. The sequence is that of DNA repair nuclease/redox regulator APEX1 (APEX1) from Pongo pygmaeus (Bornean orangutan).